Consider the following 1756-residue polypeptide: MRRSKAYGERYLASVQGSAPSPGKKLRGFYFAKLYYEAKEYDLAKKYVCTYLSVQERDPRAHRFLGLLYELEENTEKAVECYRRSLELNPPQKDLVLKIAELLCKNDVTDGRAKYWVERAAKLFPGSPAIYKLKEHLLDCEGEDGWNKLFDWIQSELYVRPDDVHMNIRLVELYRSNKRLKDAVARCHEAERNIALRSSLEWNSCVVQTLKEYLESLQCLESDKSDWRATNTDLLLAYANLMLLTLSTRDVQESRELLESFDSALQSAKSSLGGNDELSATFLEMKGHFYMHAGSLLLKMGQHGNNVQWQALSELAALCYVIAFQVPRPKIKLIKGEAGQNLLEMMACDRLSQSGHMLLNLSRGKQDFLKEVVETFANKSGQSVLYNALFSSQSSKDTSFLGSDDIGNIDVQEPELEDLARYDVGAIQAHNGSLQHLTWLGLQWNSLPALPGIRKWLKQLFHHLPQETSRLETNAPESICILDLEVFLLGVVYTSHLQLKEKCNSHHSSYQPLCLPLPVCKRLCTERQKSWWDAVCTLIHRKAVPGNSAELRLVVQHEINTLRAQEKHGLQPALLVHWAKCLQKMGRGLNSSYDQQEYIGRSVHYWKKVLPLLKIIKKNSIPEPIDPLFKHFHSVDIQASEIVEYEEDAHITFAILDAVHGNIEDAVTAFESIKSVVSYWNLALIFHRKAEDIENDAVFPEEQEECKNYLRKTRDYLIKIIDDSDSNLSVVKKLPVPLESVKEMLKSVMQELEDYSEGGPLYKNGSLRNADSEIKHSTPSPTKYSLSPSKSYKYSPKTPPRWAEDQNSLRKMICQEVKAITKLNSSKSASRHRWPTENYGPDSVPDGYQGSQTFHGAPLTVATTGPSVYYSQSPAYNSQYLLRPAANVTPTKGSSNTEFKSTKEGFSIAVSADGFKFGISEPGNQEKKSEKPLENDTGFQAQDISGQKNGRGVIFGQTSSTFTFADVAKSTSGEGFQFGKKDPNFKGFSGAGEKLFSSQCGKMANKANTSGDFEKDDDACKTEDSDDIHFEPVVQMPEKVELVTGEEGEKVLYSQGVKLFRFDAEISQWKERGLGNLKILKNEVNGKPRMLMRRDQVLKVCANHWITTTMNLKPLSGSDRAWMWLASDFSDGDAKLERLAAQFKTPELAEEFKQKFEECQRLLLDIPLQTPHKLVDTGRAAKLIQRAEEMKSGLKDFKTFLTNDQTKVTEEENKGSGTGAAGASDTTIKPNPENTGPTLEWDNYDLREDALDDNVSSSSVHDSPLASSPVRKNIFRFDESTTGFNFSFKSALSLSKSPAKLNQSGTSVGTDEESDVTQEEERDGQYFEPVVPLPDLVEVSSGEENEQVVFSHMAELYRYDKDVGQWKERGIGDIKILQNYDNKQVRIVMRRDQVLKLCANHRITPDMSLQNMKGTERVWVWTACDFADGERKVEHLAVRFKLQDVADSFKKIFDEAKTAQEKDSLITPHVSRSSTPRESPCGKIAVAVLEETTRERTDVIQGDDVADAASEVEVSSTSETTTKAVVSPPKFVFGSESVKRIFSSEKSNPFAFGNSSATGSLFGFSFNAPLKSNDSETSSVAQSGSESKVEPKKCELSKNSDIEQSSDSKVKNLSASFPMEESSINYTFKTPEKEPPLWHAEFTKEELVQKLSSTTKSADQLNGLLRETEATSAVLMEQIKLLKSEIRRLERNQEESAANVEHLKNVLLQFIFLKPGSERESLLPVINTMLQLSPEEKGKLAAVAQGLQETSIPKKK.

S21 is modified (phosphoserine). TPR repeat units follow at residues 59 to 92 (PRAHRFLGLLYELEENTEKAVECYRRSLELNPPQ), 583 to 616 (QKMGRGLNSSYDQQEYIGRSVHYWKKVLPLLKII), and 647 to 680 (EDAHITFAILDAVHGNIEDAVTAFESIKSVVSYW). Positions 759 to 804 (GPLYKNGSLRNADSEIKHSTPSPTKYSLSPSKSYKYSPKTPPRWAE) are disordered. The span at 777–796 (STPSPTKYSLSPSKSYKYSP) shows a compositional bias: low complexity. A RanBD1 1 domain is found at 1029 to 1165 (HFEPVVQMPE…FEECQRLLLD (137 aa)). 2 disordered regions span residues 1206-1241 (TKVTEEENKGSGTGAAGASDTTIKPNPENTGPTLEW) and 1299-1324 (AKLNQSGTSVGTDEESDVTQEEERDG). The segment covering 1228-1237 (IKPNPENTGP) has biased composition (polar residues). The segment covering 1310–1322 (TDEESDVTQEEER) has biased composition (acidic residues). The RanBD1 2 domain maps to 1326-1462 (YFEPVVPLPD…FDEAKTAQEK (137 aa)). Polar residues predominate over residues 1573–1586 (NDSETSSVAQSGSE). A disordered region spans residues 1573 to 1614 (NDSETSSVAQSGSESKVEPKKCELSKNSDIEQSSDSKVKNLS). The span at 1587–1610 (SKVEPKKCELSKNSDIEQSSDSKV) shows a compositional bias: basic and acidic residues. Positions 1693-1743 (QEESAANVEHLKNVLLQFIFLKPGSERESLLPVINTMLQLSPEEKGKLAAV) constitute a GRIP domain.

This chain is RANBP2-like and GRIP domain-containing protein 2 (RGPD2), found in Homo sapiens (Human).